The primary structure comprises 375 residues: Alcohol dehydrogenase 3, mitochondrial (375 aa).

The transit peptide at 1–24 (MLRTSTLFTRRVQPSLFSRNILRL) directs the protein to the mitochondrion. Cysteine 71 lines the Zn(2+) pocket. Residues histidine 72, threonine 73, and histidine 76 each coordinate NAD(+). Zn(2+) is bound by residues histidine 94, glutamate 95, cysteine 125, cysteine 128, cysteine 131, cysteine 139, and cysteine 181. Residues glycine 208, glycine 209, leucine 210, aspartate 229, lysine 234, phenylalanine 249, valine 296, serine 321, valine 323, and arginine 368 each coordinate NAD(+).

Belongs to the zinc-containing alcohol dehydrogenase family. Homotetramer. It depends on Zn(2+) as a cofactor.

It is found in the mitochondrion matrix. The protein resides in the mitochondrion inner membrane. It carries out the reaction a primary alcohol + NAD(+) = an aldehyde + NADH + H(+). The catalysed reaction is a secondary alcohol + NAD(+) = a ketone + NADH + H(+). The enzyme catalyses ethanol + NAD(+) = acetaldehyde + NADH + H(+). It catalyses the reaction butan-1-ol + NAD(+) = butanal + NADH + H(+). It carries out the reaction hexan-1-ol + NAD(+) = hexanal + NADH + H(+). Its function is as follows. Mitochondrial isozyme that reduces acetaldehyde to ethanol during the fermentation of glucose. Involved in the shuttling of mitochondrial reducing equivalents to the cytosol, where the redox balance is restored by NADH dehydrogenases on the external side of the mitochondrial inner membrane. Shows a high affinity for alcohols with a double bond conjugated to the alcohol group. In Saccharomyces cerevisiae (strain ATCC 204508 / S288c) (Baker's yeast), this protein is Alcohol dehydrogenase 3, mitochondrial (ADH3).